We begin with the raw amino-acid sequence, 365 residues long: DNA replication and repair protein RecF (365 aa).

30–37 (GRNAQGKT) lines the ATP pocket.

Belongs to the RecF family.

It localises to the cytoplasm. Its function is as follows. The RecF protein is involved in DNA metabolism; it is required for DNA replication and normal SOS inducibility. RecF binds preferentially to single-stranded, linear DNA. It also seems to bind ATP. The sequence is that of DNA replication and repair protein RecF from Streptococcus pneumoniae serotype 2 (strain D39 / NCTC 7466).